A 206-amino-acid polypeptide reads, in one-letter code: Probable chemoreceptor glutamine deamidase CheD (206 aa).

The protein belongs to the CheD family.

The enzyme catalyses L-glutaminyl-[protein] + H2O = L-glutamyl-[protein] + NH4(+). In terms of biological role, probably deamidates glutamine residues to glutamate on methyl-accepting chemotaxis receptors (MCPs), playing an important role in chemotaxis. This chain is Probable chemoreceptor glutamine deamidase CheD, found in Laribacter hongkongensis (strain HLHK9).